A 114-amino-acid chain; its full sequence is Large ribosomal subunit protein uL22 (114 aa).

This sequence belongs to the universal ribosomal protein uL22 family. Part of the 50S ribosomal subunit.

Functionally, this protein binds specifically to 23S rRNA; its binding is stimulated by other ribosomal proteins, e.g. L4, L17, and L20. It is important during the early stages of 50S assembly. It makes multiple contacts with different domains of the 23S rRNA in the assembled 50S subunit and ribosome. In terms of biological role, the globular domain of the protein is located near the polypeptide exit tunnel on the outside of the subunit, while an extended beta-hairpin is found that lines the wall of the exit tunnel in the center of the 70S ribosome. This Streptococcus pyogenes serotype M6 (strain ATCC BAA-946 / MGAS10394) protein is Large ribosomal subunit protein uL22.